Reading from the N-terminus, the 320-residue chain is o-succinylbenzoate synthase (320 aa).

The active-site Proton donor is the lysine 133. Mg(2+) contacts are provided by aspartate 161, glutamate 190, and aspartate 213. Lysine 235 (proton acceptor) is an active-site residue.

This sequence belongs to the mandelate racemase/muconate lactonizing enzyme family. MenC type 1 subfamily. It depends on a divalent metal cation as a cofactor.

The enzyme catalyses (1R,6R)-6-hydroxy-2-succinyl-cyclohexa-2,4-diene-1-carboxylate = 2-succinylbenzoate + H2O. The protein operates within quinol/quinone metabolism; 1,4-dihydroxy-2-naphthoate biosynthesis; 1,4-dihydroxy-2-naphthoate from chorismate: step 4/7. Its pathway is quinol/quinone metabolism; menaquinone biosynthesis. Converts 2-succinyl-6-hydroxy-2,4-cyclohexadiene-1-carboxylate (SHCHC) to 2-succinylbenzoate (OSB). The polypeptide is o-succinylbenzoate synthase (Escherichia fergusonii (strain ATCC 35469 / DSM 13698 / CCUG 18766 / IAM 14443 / JCM 21226 / LMG 7866 / NBRC 102419 / NCTC 12128 / CDC 0568-73)).